The chain runs to 235 residues: MKFEAKLESGILIRRYKRFLTDIKLPDKSERTIHCANSGAMTGCAEPGNTVFFSTSSNLKRKYPNSWELSVTEHNHTICVNTIRANQLVVEAIINKEIDELVNYAELKTEVKYGSENSRIDIFLSAEMLPDCYIEVKSVTLLDESGQGYFPDSVTTRGQKHLRELTEIAQNGQKAVLFFAVLHSGIEKVSIAHHIDQQYYSLLLEAIESGVTVLCYQAEMSPTEMKIVRKLPFSI.

The protein belongs to the SfsA family.

The chain is Sugar fermentation stimulation protein homolog from Aliivibrio salmonicida (strain LFI1238) (Vibrio salmonicida (strain LFI1238)).